Consider the following 199-residue polypeptide: Recombination protein RecR (199 aa).

The segment at 58 to 73 adopts a C4-type zinc-finger fold; sequence CSACGNVDTQDPCAIC. The region spanning 81–176 is the Toprim domain; sequence HILCIVEEVG…SVSRLAHGVP (96 aa).

The protein belongs to the RecR family.

In terms of biological role, may play a role in DNA repair. It seems to be involved in an RecBC-independent recombinational process of DNA repair. It may act with RecF and RecO. This Parvibaculum lavamentivorans (strain DS-1 / DSM 13023 / NCIMB 13966) protein is Recombination protein RecR.